The primary structure comprises 434 residues: Adenylosuccinate synthetase (434 aa).

GTP contacts are provided by residues Gly-22–Lys-28 and Gly-50–Thr-52. Residue Asp-23 is the Proton acceptor of the active site. Residues Asp-23 and Gly-50 each coordinate Mg(2+). IMP is bound by residues Asp-23 to Lys-26, Asn-48 to His-51, Thr-139, Arg-153, Gln-234, Thr-249, and Arg-313. His-51 acts as the Proton donor in catalysis. Ala-309–Arg-315 contacts substrate. GTP is bound by residues Arg-315, Lys-341 to Asp-343, and Ser-423 to Gly-425.

It belongs to the adenylosuccinate synthetase family. In terms of assembly, homodimer. Mg(2+) serves as cofactor.

The protein resides in the cytoplasm. The enzyme catalyses IMP + L-aspartate + GTP = N(6)-(1,2-dicarboxyethyl)-AMP + GDP + phosphate + 2 H(+). Its pathway is purine metabolism; AMP biosynthesis via de novo pathway; AMP from IMP: step 1/2. Functionally, plays an important role in the de novo pathway of purine nucleotide biosynthesis. Catalyzes the first committed step in the biosynthesis of AMP from IMP. This is Adenylosuccinate synthetase from Chlorobium phaeovibrioides (strain DSM 265 / 1930) (Prosthecochloris vibrioformis (strain DSM 265)).